A 469-amino-acid polypeptide reads, in one-letter code: MNPNQKIITIGSVSLTIATVCFLMQIAILVTTVTLHFKQYECDSPANNQVMPCEPIIIERNITEIVYLTNTTIEKEICPKLVEYRNWSKPQCKITGFAPFSKDNSIRLSAGGDIWVTREPYVSCDPGKCYQFALGQGTTLDNKHSNDTIHDRIPHRTLLMNELGVPFHLGTRQVCIAWSSSSCHDGKAWLHVCVTGDDKNATASFIYDGRLVDSIGSWSQNILRTQESECVCINGTCTVVMTDGSASGRADTRILFIEEGKIVHISPLSGSAQHVEECSCYPRYPGVRCICRDNWKGSNRPVVDINVKDYSIDSRYVCSGLVGDTPRNNDRSSNSNCRNPNNDKGNHGVKGWAFDDGNDVWMGRTISKDSRSGYETFKVIGGWSTPNSKSQINRQVIVDSDNRSGYSGIFSVEGKSCINRCFYVELIRGREQETRVWWTSNSIVVFCGTSGTYGTGSWPDGADINLMPI.

Residues Met-1–Thr-9 lie on the Intravirion side of the membrane. Residues Ile-10–Val-30 traverse the membrane as a helical segment. The tract at residues Gly-11 to Val-33 is involved in apical transport and lipid raft association. Residues Thr-31–Ile-469 lie on the Virion surface side of the membrane. A hypervariable stalk region region spans residues His-36–Ser-88. 3 N-linked (GlcNAc...) asparagine; by host glycosylation sites follow: Asn-61, Asn-70, and Asn-86. The interval Gln-91 to Ile-469 is head of neuraminidase. Disulfide bonds link Cys-92-Cys-417, Cys-124-Cys-129, Cys-183-Cys-230, Cys-232-Cys-237, Cys-278-Cys-291, Cys-280-Cys-289, Cys-318-Cys-337, and Cys-421-Cys-447. Arg-118 serves as a coordination point for substrate. The N-linked (GlcNAc...) asparagine; by host glycan is linked to Asn-146. The active-site Proton donor/acceptor is the Asp-151. Arg-152 lines the substrate pocket. Asn-200 and Asn-234 each carry an N-linked (GlcNAc...) asparagine; by host glycan. Glu-276–Glu-277 is a substrate binding site. Residue Arg-292 coordinates substrate. Residues Asp-293, Gly-297, and Asp-324 each contribute to the Ca(2+) site. The segment at Pro-326–Lys-350 is disordered. Residues Arg-331–Asp-343 are compositionally biased toward low complexity. Arg-371 lines the substrate pocket. N-linked (GlcNAc...) asparagine; by host glycosylation is present at Asn-402. Residue Tyr-406 is the Nucleophile of the active site.

It belongs to the glycosyl hydrolase 34 family. As to quaternary structure, homotetramer. Requires Ca(2+) as cofactor. In terms of processing, N-glycosylated.

The protein resides in the virion membrane. The protein localises to the host apical cell membrane. The catalysed reaction is Hydrolysis of alpha-(2-&gt;3)-, alpha-(2-&gt;6)-, alpha-(2-&gt;8)- glycosidic linkages of terminal sialic acid residues in oligosaccharides, glycoproteins, glycolipids, colominic acid and synthetic substrates.. Inhibited by the neuraminidase inhibitors zanamivir (Relenza) and oseltamivir (Tamiflu). These drugs interfere with the release of progeny virus from infected cells and are effective against all influenza strains. Resistance to neuraminidase inhibitors is quite rare. Its function is as follows. Catalyzes the removal of terminal sialic acid residues from viral and cellular glycoconjugates. Cleaves off the terminal sialic acids on the glycosylated HA during virus budding to facilitate virus release. Additionally helps virus spread through the circulation by further removing sialic acids from the cell surface. These cleavages prevent self-aggregation and ensure the efficient spread of the progeny virus from cell to cell. Otherwise, infection would be limited to one round of replication. Described as a receptor-destroying enzyme because it cleaves a terminal sialic acid from the cellular receptors. May facilitate viral invasion of the upper airways by cleaving the sialic acid moieties on the mucin of the airway epithelial cells. Likely to plays a role in the budding process through its association with lipid rafts during intracellular transport. May additionally display a raft-association independent effect on budding. Plays a role in the determination of host range restriction on replication and virulence. Sialidase activity in late endosome/lysosome traffic seems to enhance virus replication. This chain is Neuraminidase, found in Aves (whales).